Reading from the N-terminus, the 468-residue chain is 6-phospho-beta-galactosidase (468 aa).

Positions 19, 116, 159, 160, and 297 each coordinate D-galactose 6-phosphate. E160 functions as the Proton donor in the catalytic mechanism. E375 functions as the Nucleophile in the catalytic mechanism. S428, W429, K435, and Y437 together coordinate D-galactose 6-phosphate.

The protein belongs to the glycosyl hydrolase 1 family.

It catalyses the reaction a 6-phospho-beta-D-galactoside + H2O = D-galactose 6-phosphate + an alcohol. Its pathway is carbohydrate metabolism; lactose degradation; D-galactose 6-phosphate and beta-D-glucose from lactose 6-phosphate: step 1/1. This is 6-phospho-beta-galactosidase from Streptococcus pyogenes serotype M2 (strain MGAS10270).